A 132-amino-acid chain; its full sequence is Extracellular small neutral protease (132 aa).

Positions 76 and 78 each coordinate Ca(2+). Histidine 83 is a binding site for Zn(2+). Glutamate 84 is an active-site residue. 2 residues coordinate Zn(2+): histidine 87 and aspartate 93. A disulfide bond links cysteine 99 and cysteine 112.

Belongs to the peptidase M7 family. Ca(2+) serves as cofactor. Zn(2+) is required as a cofactor.

The protein resides in the secreted. The catalysed reaction is Hydrolyzes proteins with a preference for Tyr or Phe in the P1' position. Has no action on amino-acid p-nitroanilides.. Functionally, specifically hydrolyzes the peptide bond at the imino side of aromatic residues. The sequence is that of Extracellular small neutral protease (snpA) from Streptomyces caespitosus.